We begin with the raw amino-acid sequence, 1167 residues long: DNA-directed RNA polymerase subunit beta (1167 aa).

It belongs to the RNA polymerase beta chain family. The RNAP catalytic core consists of 2 alpha, 1 beta, 1 beta' and 1 omega subunit. When a sigma factor is associated with the core the holoenzyme is formed, which can initiate transcription.

The catalysed reaction is RNA(n) + a ribonucleoside 5'-triphosphate = RNA(n+1) + diphosphate. In terms of biological role, DNA-dependent RNA polymerase catalyzes the transcription of DNA into RNA using the four ribonucleoside triphosphates as substrates. The polypeptide is DNA-directed RNA polymerase subunit beta (Mycolicibacterium vanbaalenii (strain DSM 7251 / JCM 13017 / BCRC 16820 / KCTC 9966 / NRRL B-24157 / PYR-1) (Mycobacterium vanbaalenii)).